The primary structure comprises 95 residues: Aspartyl/glutamyl-tRNA(Asn/Gln) amidotransferase subunit C (95 aa).

Belongs to the GatC family. In terms of assembly, heterotrimer of A, B and C subunits.

It carries out the reaction L-glutamyl-tRNA(Gln) + L-glutamine + ATP + H2O = L-glutaminyl-tRNA(Gln) + L-glutamate + ADP + phosphate + H(+). It catalyses the reaction L-aspartyl-tRNA(Asn) + L-glutamine + ATP + H2O = L-asparaginyl-tRNA(Asn) + L-glutamate + ADP + phosphate + 2 H(+). Functionally, allows the formation of correctly charged Asn-tRNA(Asn) or Gln-tRNA(Gln) through the transamidation of misacylated Asp-tRNA(Asn) or Glu-tRNA(Gln) in organisms which lack either or both of asparaginyl-tRNA or glutaminyl-tRNA synthetases. The reaction takes place in the presence of glutamine and ATP through an activated phospho-Asp-tRNA(Asn) or phospho-Glu-tRNA(Gln). The protein is Aspartyl/glutamyl-tRNA(Asn/Gln) amidotransferase subunit C of Laribacter hongkongensis (strain HLHK9).